The chain runs to 726 residues: Catalase-peroxidase (726 aa).

Positions 1–33 (MSTTDDTHNTLSTGKCPFHQGGHDRSAGAGTAS) are disordered. A cross-link (tryptophyl-tyrosyl-methioninium (Trp-Tyr) (with M-252)) is located at residues 105-226 (WHGAGTYRSI…LGATEMGLIY (122 aa)). The active-site Proton acceptor is His106. A cross-link (tryptophyl-tyrosyl-methioninium (Tyr-Met) (with W-105)) is located at residues 226 to 252 (YVNPEGPDHSGEPLSAAAAIRATFGNM). His267 provides a ligand contact to heme b.

It belongs to the peroxidase family. Peroxidase/catalase subfamily. In terms of assembly, homodimer or homotetramer. The cofactor is heme b. Post-translationally, formation of the three residue Trp-Tyr-Met cross-link is important for the catalase, but not the peroxidase activity of the enzyme.

It carries out the reaction H2O2 + AH2 = A + 2 H2O. It catalyses the reaction 2 H2O2 = O2 + 2 H2O. Functionally, bifunctional enzyme with both catalase and broad-spectrum peroxidase activity. This Salmonella typhi protein is Catalase-peroxidase.